A 160-amino-acid chain; its full sequence is Cyanate hydratase (160 aa).

Residues Arg-100, Glu-103, and Ser-126 contribute to the active site.

This sequence belongs to the cyanase family.

It carries out the reaction cyanate + hydrogencarbonate + 3 H(+) = NH4(+) + 2 CO2. Functionally, catalyzes the reaction of cyanate with bicarbonate to produce ammonia and carbon dioxide. This Aspergillus niger (strain ATCC MYA-4892 / CBS 513.88 / FGSC A1513) protein is Cyanate hydratase.